A 79-amino-acid polypeptide reads, in one-letter code: MANTKSALKQIRKNNLKRLQNKFVLKTTKTAIKKLKLESKKNLNAFPKISSLIDKLAKKKIIHKNKSNRIKSKLVKLIN.

This sequence belongs to the bacterial ribosomal protein bS20 family.

Binds directly to 16S ribosomal RNA. The polypeptide is Small ribosomal subunit protein bS20 (Karelsulcia muelleri (strain GWSS) (Sulcia muelleri)).